The primary structure comprises 532 residues: Eukaryotic translation initiation factor 4B1 (532 aa).

Disordered regions lie at residues 16–365, 401–434, and 451–532; these read EAER…LEEQ, KKLEKESVAPEIKESDQEPGSNNNHNDLPEIIRG, and RFRQ…REGW. Positions 26–35 are enriched in low complexity; it reads AEATAATADT. Composition is skewed to gly residues over residues 105-120 and 132-147; these read RLGGGFSSYGGRSGGR and WSGGGGGGGRRPYGGG. Residues 167–180 are compositionally biased toward basic and acidic residues; it reads RADEVDDWGKEKKP. The short motif at 177–184 is the Nuclear localization signal 1 element; that stretch reads EKKPLPSF. The span at 193–217 shows a compositional bias: gly residues; sequence SGDGGGFGGGGSGFGGGGGGGGGGL. Positions 237–244 match the Nuclear localization signal 2 motif; it reads SSTFGSSF. The segment covering 237–247 has biased composition (low complexity); that stretch reads SSTFGSSFGDS. Composition is skewed to basic and acidic residues over residues 249–263 and 286–310; these read QEERRRLVLEPRKVE and RPREDVLAEKGLDWKKIDSEIEAKK. The span at 315–337 shows a compositional bias: low complexity; it reads TSRPTSAHSSRPSSAQSNRSESS. Composition is skewed to basic and acidic residues over residues 355 to 365, 401 to 416, 472 to 494, and 507 to 520; these read AKPREVLLEEQ, KKLEKESVAPEIKESD, ERTHSRAGSIDETRSFESTERPR, and NEQRRNFQGTKERG.

Belongs to the eIF-4 subunit B family. Homodimer. Nonspherical monomer. mRNA-discriminating component of initiation complexes. Post-translationally, phosphorylated.

Its subcellular location is the nucleus. Promotes the eIF4F and eIF4A RNA-dependent ATP-hydrolysis activity with different efficiency depending on mRNAs, thus providing mRNA discrimination during initiation of translation. The sequence is that of Eukaryotic translation initiation factor 4B1 from Arabidopsis thaliana (Mouse-ear cress).